We begin with the raw amino-acid sequence, 474 residues long: Trehalose-6-phosphate synthase (474 aa).

Arg10 serves as a coordination point for D-glucose 6-phosphate. Position 22-23 (22-23 (GG)) interacts with UDP-alpha-D-glucose. Tyr77 and Asp131 together coordinate D-glucose 6-phosphate. UDP-alpha-D-glucose contacts are provided by Arg263 and Lys268. Arg301 serves as a coordination point for D-glucose 6-phosphate. UDP-alpha-D-glucose is bound by residues Phe340 and 366-370 (LVAKE).

It belongs to the glycosyltransferase 20 family. Homotetramer.

The catalysed reaction is D-glucose 6-phosphate + UDP-alpha-D-glucose = alpha,alpha-trehalose 6-phosphate + UDP + H(+). It functions in the pathway glycan biosynthesis; trehalose biosynthesis. In terms of biological role, probably involved in the osmoprotection via the biosynthesis of trehalose. Catalyzes the transfer of glucose from UDP-alpha-D-glucose (UDP-Glc) to D-glucose 6-phosphate (Glc-6-P) to form trehalose-6-phosphate. Acts with retention of the anomeric configuration of the UDP-sugar donor. This Escherichia coli O157:H7 protein is Trehalose-6-phosphate synthase.